A 504-amino-acid polypeptide reads, in one-letter code: 2,3-bisphosphoglycerate-independent phosphoglycerate mutase (504 aa).

Residues D11 and S61 each coordinate Mn(2+). Residue S61 is the Phosphoserine intermediate of the active site. Residues H122, 152–153 (RD), R183, R189, 255–258 (RNDR), and K329 contribute to the substrate site. Residues D396, H400, D437, H438, and H455 each coordinate Mn(2+).

It belongs to the BPG-independent phosphoglycerate mutase family. As to quaternary structure, monomer. The cofactor is Mn(2+).

The enzyme catalyses (2R)-2-phosphoglycerate = (2R)-3-phosphoglycerate. It functions in the pathway carbohydrate degradation; glycolysis; pyruvate from D-glyceraldehyde 3-phosphate: step 3/5. Its function is as follows. Catalyzes the interconversion of 2-phosphoglycerate and 3-phosphoglycerate. This is 2,3-bisphosphoglycerate-independent phosphoglycerate mutase from Bacteroides fragilis (strain YCH46).